Consider the following 360-residue polypeptide: tRNA/tmRNA (uracil-C(5))-methyltransferase (360 aa).

Residues glutamine 185, tyrosine 213, asparagine 218, glutamate 234, and aspartate 294 each contribute to the S-adenosyl-L-methionine site. Catalysis depends on cysteine 319, which acts as the Nucleophile. The active-site Proton acceptor is glutamate 353.

Belongs to the class I-like SAM-binding methyltransferase superfamily. RNA M5U methyltransferase family. TrmA subfamily.

The catalysed reaction is uridine(54) in tRNA + S-adenosyl-L-methionine = 5-methyluridine(54) in tRNA + S-adenosyl-L-homocysteine + H(+). It catalyses the reaction uridine(341) in tmRNA + S-adenosyl-L-methionine = 5-methyluridine(341) in tmRNA + S-adenosyl-L-homocysteine + H(+). Dual-specificity methyltransferase that catalyzes the formation of 5-methyluridine at position 54 (m5U54) in all tRNAs, and that of position 341 (m5U341) in tmRNA (transfer-mRNA). This chain is tRNA/tmRNA (uracil-C(5))-methyltransferase, found in Nitratiruptor sp. (strain SB155-2).